The sequence spans 734 residues: Phosphoribosylformylglycinamidine synthase subunit PurL (734 aa).

Residue H46 is part of the active site. Residues Y49 and K88 each contribute to the ATP site. Position 90 (E90) interacts with Mg(2+). Substrate is bound by residues 91-94 (SHNH) and R113. H92 functions as the Proton acceptor in the catalytic mechanism. Mg(2+) is bound at residue D114. Q237 contacts substrate. D265 serves as a coordination point for Mg(2+). 309-311 (ESQ) serves as a coordination point for substrate. 2 residues coordinate ATP: D489 and G526. Residue N527 coordinates Mg(2+). S529 provides a ligand contact to substrate.

It belongs to the FGAMS family. Monomer. Part of the FGAM synthase complex composed of 1 PurL, 1 PurQ and 2 PurS subunits.

The protein resides in the cytoplasm. It catalyses the reaction N(2)-formyl-N(1)-(5-phospho-beta-D-ribosyl)glycinamide + L-glutamine + ATP + H2O = 2-formamido-N(1)-(5-O-phospho-beta-D-ribosyl)acetamidine + L-glutamate + ADP + phosphate + H(+). The protein operates within purine metabolism; IMP biosynthesis via de novo pathway; 5-amino-1-(5-phospho-D-ribosyl)imidazole from N(2)-formyl-N(1)-(5-phospho-D-ribosyl)glycinamide: step 1/2. Functionally, part of the phosphoribosylformylglycinamidine synthase complex involved in the purines biosynthetic pathway. Catalyzes the ATP-dependent conversion of formylglycinamide ribonucleotide (FGAR) and glutamine to yield formylglycinamidine ribonucleotide (FGAM) and glutamate. The FGAM synthase complex is composed of three subunits. PurQ produces an ammonia molecule by converting glutamine to glutamate. PurL transfers the ammonia molecule to FGAR to form FGAM in an ATP-dependent manner. PurS interacts with PurQ and PurL and is thought to assist in the transfer of the ammonia molecule from PurQ to PurL. This is Phosphoribosylformylglycinamidine synthase subunit PurL from Gluconobacter oxydans (strain 621H) (Gluconobacter suboxydans).